We begin with the raw amino-acid sequence, 387 residues long: GTPase Obg (387 aa).

In terms of domain architecture, Obg spans 1–159 (MKFVDEAIIR…RSLKLELLLL (159 aa)). Residues 160-333 (ADVGLLGMPN…LALKLLDFID (174 aa)) enclose the OBG-type G domain. GTP-binding positions include 166-173 (GMPNAGKS), 191-195 (FTTLV), 213-216 (DIPG), 283-286 (NKAD), and 314-316 (SAY). Mg(2+) is bound by residues Ser-173 and Thr-193.

It belongs to the TRAFAC class OBG-HflX-like GTPase superfamily. OBG GTPase family. As to quaternary structure, monomer. Mg(2+) is required as a cofactor.

It localises to the cytoplasm. Functionally, an essential GTPase which binds GTP, GDP and possibly (p)ppGpp with moderate affinity, with high nucleotide exchange rates and a fairly low GTP hydrolysis rate. Plays a role in control of the cell cycle, stress response, ribosome biogenesis and in those bacteria that undergo differentiation, in morphogenesis control. This Shewanella pealeana (strain ATCC 700345 / ANG-SQ1) protein is GTPase Obg.